The chain runs to 900 residues: Alanine--tRNA ligase (900 aa).

Residues His587, His591, Cys691, and His695 each contribute to the Zn(2+) site.

The protein belongs to the class-II aminoacyl-tRNA synthetase family. Zn(2+) serves as cofactor.

Its subcellular location is the cytoplasm. The enzyme catalyses tRNA(Ala) + L-alanine + ATP = L-alanyl-tRNA(Ala) + AMP + diphosphate. In terms of biological role, catalyzes the attachment of alanine to tRNA(Ala) in a two-step reaction: alanine is first activated by ATP to form Ala-AMP and then transferred to the acceptor end of tRNA(Ala). Also edits incorrectly charged Ser-tRNA(Ala) and Gly-tRNA(Ala) via its editing domain. The polypeptide is Alanine--tRNA ligase (Aeropyrum pernix (strain ATCC 700893 / DSM 11879 / JCM 9820 / NBRC 100138 / K1)).